Consider the following 89-residue polypeptide: MKFSLATIALAAAVVASPTNPPTEAGSCNVKGKTGNVTCCNSAIPILGQLLCNVLASGTCNSGQSAYCCDTGGNTGLIVVQAVNCVELL.

Residues 1–16 (MKFSLATIALAAAVVA) form the signal peptide. Intrachain disulfides connect C28-C68, C39-C60, C40-C52, and C69-C85. N-linked (GlcNAc...) asparagine glycosylation occurs at N36.

Belongs to the fungal hydrophobin family.

It localises to the secreted. Its subcellular location is the cell wall. The protein localises to the vacuole. The protein resides in the cytoplasmic vesicle. Aerial growth, conidiation, and dispersal of filamentous fungi in the environment rely upon a capability of their secreting small amphipathic proteins called hydrophobins (HPBs) with low sequence identity. Class I can self-assemble into an outermost layer of rodlet bundles on aerial cell surfaces, conferring cellular hydrophobicity that supports fungal growth, development and dispersal; whereas Class II form highly ordered films at water-air interfaces through intermolecular interactions but contribute nothing to the rodlet structure. Hyd1D contributes to certain cell wall-related features, such as hydrophobicity but is not involved in cell wall-related events during fungal proliferation in host hemocoel. Does not contribute to conidial hydrophobicity. Involved in insect hemocoel colonization independent of cell hydrophobicity. This is Class I hydrophobin D from Beauveria bassiana (strain ARSEF 2860) (White muscardine disease fungus).